A 256-amino-acid polypeptide reads, in one-letter code: Protein N-terminal and lysine N-methyltransferase EFM7 (256 aa).

The interval 1–26 (MSDTESLNDALGLFDEPEDFRPEKPK) is disordered. S-adenosyl-L-methionine is bound by residues W64, 90–92 (GAA), D112, W145, and S168.

The protein belongs to the class I-like SAM-binding methyltransferase superfamily. EFM7 family.

The protein localises to the cytoplasm. Functionally, S-adenosyl-L-methionine-dependent protein methyltransferase that trimethylates the N-terminal glycine 'Gly-2' of elongation factor 1-alpha, before also catalyzing the mono- and dimethylation of 'Lys-3'. The sequence is that of Protein N-terminal and lysine N-methyltransferase EFM7 from Candida glabrata (strain ATCC 2001 / BCRC 20586 / JCM 3761 / NBRC 0622 / NRRL Y-65 / CBS 138) (Yeast).